A 337-amino-acid polypeptide reads, in one-letter code: Vacuolar protein sorting-associated protein 26B (337 aa).

The tract at residues 311 to 337 (SQRFEGTSHPETRPQHSGAAAVEQEQE) is disordered.

The protein belongs to the VPS26 family. As to quaternary structure, component of the heterotrimeric retromer cargo-selective complex (CSC) which is believed to associate with variable sorting nexins to form functionally distinct retromer complex variants.

Its subcellular location is the cytoplasm. It localises to the membrane. The protein resides in the endosome. In terms of biological role, acts as a component of the retromer cargo-selective complex (CSC). The CSC is believed to be the core functional component of retromer or respective retromer complex variants acting to prevent missorting of selected transmembrane cargo proteins into the lysosomal degradation pathway. Retromer mediates retrograde transport of cargo proteins from endosomes to the trans-Golgi network (TGN). This is Vacuolar protein sorting-associated protein 26B (vps26b) from Xenopus tropicalis (Western clawed frog).